Here is a 204-residue protein sequence, read N- to C-terminus: ATP-dependent Clp protease proteolytic subunit (204 aa).

S100 serves as the catalytic Nucleophile. H125 is a catalytic residue.

This sequence belongs to the peptidase S14 family. As to quaternary structure, fourteen ClpP subunits assemble into 2 heptameric rings which stack back to back to give a disk-like structure with a central cavity, resembling the structure of eukaryotic proteasomes.

It localises to the cytoplasm. It catalyses the reaction Hydrolysis of proteins to small peptides in the presence of ATP and magnesium. alpha-casein is the usual test substrate. In the absence of ATP, only oligopeptides shorter than five residues are hydrolyzed (such as succinyl-Leu-Tyr-|-NHMec, and Leu-Tyr-Leu-|-Tyr-Trp, in which cleavage of the -Tyr-|-Leu- and -Tyr-|-Trp bonds also occurs).. Cleaves peptides in various proteins in a process that requires ATP hydrolysis. Has a chymotrypsin-like activity. Plays a major role in the degradation of misfolded proteins. The chain is ATP-dependent Clp protease proteolytic subunit from Anaeromyxobacter sp. (strain Fw109-5).